Consider the following 446-residue polypeptide: Phosphoglucosamine mutase (446 aa).

Residue Ser103 is the Phosphoserine intermediate of the active site. Mg(2+) is bound by residues Ser103, Asp242, Asp244, and Asp246. Position 103 is a phosphoserine (Ser103).

Belongs to the phosphohexose mutase family. Mg(2+) serves as cofactor. Post-translationally, activated by phosphorylation.

It catalyses the reaction alpha-D-glucosamine 1-phosphate = D-glucosamine 6-phosphate. Functionally, catalyzes the conversion of glucosamine-6-phosphate to glucosamine-1-phosphate. The sequence is that of Phosphoglucosamine mutase from Vibrio vulnificus (strain CMCP6).